Consider the following 418-residue polypeptide: Gamma-glutamyl phosphate reductase (418 aa).

This sequence belongs to the gamma-glutamyl phosphate reductase family.

It is found in the cytoplasm. It catalyses the reaction L-glutamate 5-semialdehyde + phosphate + NADP(+) = L-glutamyl 5-phosphate + NADPH + H(+). It functions in the pathway amino-acid biosynthesis; L-proline biosynthesis; L-glutamate 5-semialdehyde from L-glutamate: step 2/2. Catalyzes the NADPH-dependent reduction of L-glutamate 5-phosphate into L-glutamate 5-semialdehyde and phosphate. The product spontaneously undergoes cyclization to form 1-pyrroline-5-carboxylate. This is Gamma-glutamyl phosphate reductase from Geobacter metallireducens (strain ATCC 53774 / DSM 7210 / GS-15).